A 500-amino-acid chain; its full sequence is Glucose-6-phosphate 1-dehydrogenase (500 aa).

Residues Gly18 to Lys25, Arg52, and Lys155 each bind NADP(+). D-glucose 6-phosphate-binding positions include Lys155, His185–Lys189, Glu223, and Asp242. The active-site Proton acceptor is the His247. Residue Lys338 participates in NADP(+) binding. Position 341 (Lys341) interacts with D-glucose 6-phosphate. Residues Lys347, Arg351, and Arg373 each coordinate NADP(+). A D-glucose 6-phosphate-binding site is contributed by Gln375. Residues Tyr381 to Lys383, Asp401 to Thr403, and Tyr483 each bind NADP(+).

Belongs to the glucose-6-phosphate dehydrogenase family.

The protein resides in the cytoplasm. It localises to the cytosol. It catalyses the reaction D-glucose 6-phosphate + NADP(+) = 6-phospho-D-glucono-1,5-lactone + NADPH + H(+). The protein operates within carbohydrate degradation; pentose phosphate pathway; D-ribulose 5-phosphate from D-glucose 6-phosphate (oxidative stage): step 1/3. Functionally, catalyzes the rate-limiting step of the oxidative pentose-phosphate pathway, which represents a route for the dissimilation of carbohydrates besides glycolysis. The main function of this enzyme is to provide reducing power (NADPH) and pentose phosphates for fatty acid and nucleic acid synthesis. The polypeptide is Glucose-6-phosphate 1-dehydrogenase (Schizosaccharomyces pombe (strain 972 / ATCC 24843) (Fission yeast)).